The following is a 390-amino-acid chain: Oxysterol-binding protein 10 (390 aa).

It belongs to the OSBP family.

The chain is Oxysterol-binding protein 10 (osbJ) from Dictyostelium discoideum (Social amoeba).